A 124-amino-acid polypeptide reads, in one-letter code: Large ribosomal subunit protein bL12 (124 aa).

It belongs to the bacterial ribosomal protein bL12 family. Homodimer. Part of the ribosomal stalk of the 50S ribosomal subunit. Forms a multimeric L10(L12)X complex, where L10 forms an elongated spine to which 2 to 4 L12 dimers bind in a sequential fashion. Binds GTP-bound translation factors.

Its function is as follows. Forms part of the ribosomal stalk which helps the ribosome interact with GTP-bound translation factors. Is thus essential for accurate translation. The polypeptide is Large ribosomal subunit protein bL12 (Allorhizobium ampelinum (strain ATCC BAA-846 / DSM 112012 / S4) (Agrobacterium vitis (strain S4))).